Here is a 299-residue protein sequence, read N- to C-terminus: ATP phosphoribosyltransferase (299 aa).

The protein belongs to the ATP phosphoribosyltransferase family. Long subfamily. Requires Mg(2+) as cofactor.

The protein localises to the cytoplasm. It catalyses the reaction 1-(5-phospho-beta-D-ribosyl)-ATP + diphosphate = 5-phospho-alpha-D-ribose 1-diphosphate + ATP. It functions in the pathway amino-acid biosynthesis; L-histidine biosynthesis; L-histidine from 5-phospho-alpha-D-ribose 1-diphosphate: step 1/9. Feedback inhibited by histidine. Catalyzes the condensation of ATP and 5-phosphoribose 1-diphosphate to form N'-(5'-phosphoribosyl)-ATP (PR-ATP). Has a crucial role in the pathway because the rate of histidine biosynthesis seems to be controlled primarily by regulation of HisG enzymatic activity. The sequence is that of ATP phosphoribosyltransferase from Mannheimia succiniciproducens (strain KCTC 0769BP / MBEL55E).